The following is a 194-amino-acid chain: Pyridoxal 5'-phosphate synthase subunit PdxT (194 aa).

Residue 54–56 (GES) coordinates L-glutamine. Catalysis depends on Cys83, which acts as the Nucleophile. L-glutamine is bound by residues Arg110 and 139 to 140 (IR). Residues His175 and Glu177 each act as charge relay system in the active site.

The protein belongs to the glutaminase PdxT/SNO family. As to quaternary structure, in the presence of PdxS, forms a dodecamer of heterodimers. Only shows activity in the heterodimer.

The catalysed reaction is aldehydo-D-ribose 5-phosphate + D-glyceraldehyde 3-phosphate + L-glutamine = pyridoxal 5'-phosphate + L-glutamate + phosphate + 3 H2O + H(+). It carries out the reaction L-glutamine + H2O = L-glutamate + NH4(+). It participates in cofactor biosynthesis; pyridoxal 5'-phosphate biosynthesis. Functionally, catalyzes the hydrolysis of glutamine to glutamate and ammonia as part of the biosynthesis of pyridoxal 5'-phosphate. The resulting ammonia molecule is channeled to the active site of PdxS. The chain is Pyridoxal 5'-phosphate synthase subunit PdxT from Methanoregula boonei (strain DSM 21154 / JCM 14090 / 6A8).